A 203-amino-acid polypeptide reads, in one-letter code: Selenocysteine-containing peroxiredoxin PrxU (203 aa).

The Thioredoxin domain maps to 2-160 (VSVGKKAPDF…TLRQIQAFQL (159 aa)). Residue U47 is part of the active site. U47 is a non-standard amino acid (selenocysteine).

It belongs to the peroxiredoxin family. AhpC/Prx1 subfamily.

It catalyses the reaction a hydroperoxide + [thioredoxin]-dithiol = an alcohol + [thioredoxin]-disulfide + H2O. In terms of biological role, thiol-specific peroxidase that catalyzes the reduction of hydrogen peroxide and organic hydroperoxides to water and alcohols, respectively. Plays a role in cell protection against oxidative stress by detoxifying peroxides. The sequence is that of Selenocysteine-containing peroxiredoxin PrxU from Peptoclostridium acidaminophilum (Eubacterium acidaminophilum).